Here is a 387-residue protein sequence, read N- to C-terminus: Norsolorinic acid reductase stcV (387 aa).

Asp69 contacts NADP(+). The active-site Proton donor is the Tyr74. His148 contacts substrate. Residues 178–179 (SD), Gln204, 233–243 (GALGRGQYKSA), and 301–309 (RTVEQLEAN) contribute to the NADP(+) site.

It belongs to the aldo/keto reductase family. Aldo/keto reductase 2 subfamily.

It functions in the pathway mycotoxin biosynthesis; sterigmatocystin biosynthesis. Norsolorinic acid reductase; part of the gene cluster that mediates the biosynthesis of sterigmatocystin (ST), a polyketide-derived furanocoumarin which is part of the most toxic and carcinogenic compounds among the known mycotoxins. The first step in the biosynthesis of sterigmatocystin is the production of hexanoate by the fatty acid synthase (FAS) units stcJ and stcK. The polyketide backbone is assembled by the non-reducing polyketide synthase stcA by condensation of the starter hexanoyl-CoA and 7 malonyl-CoA extender units followed by cyclization and release of norsolorinic acid. Norsolorinic acid is the first stable intermediate in the biosynthesis of sterigmatocystin and is converted into averantin (AVN) by the ketoreductase stcE which reduces the hexanoate ketone to an alcohol. Averantin is then oxidized into 5'-hydroxyaverantin (HAVN) by the cytochrome P450 monooxygenase stcF. 5'-hydroxyaverantin is further converted to 5'-oxyaverantin (OAVN) by the 5'-hydroxyaverantin dehydrogenase stcG. The next step is the conversion of OAVN into averufin (AVF) which is catalyzed by a yet to be identified enzyme. The cytochrome P450 monooxygenase stcB and the flavin-binding monooxygenase stcW are both required for the conversion of averufin to 1-hydroxyversicolorone. The esterase stcI probably catalyzes the formation of versiconal hemiacetal acetate from 1-hydroxyversicolorone. The oxydoreductase stcN then probably catalyzes the biosynthetic step from versiconal to versicolorin B (VERB). The next step is performed by the versicolorin B desaturase stcL to produce versicolorin A (VERA). The ketoreductase stcU and the cytochrome P450 monooxygenase stcS are involved in the conversion of versicolorin A to demethylsterigmatocystin. The Baeyer-Villiger oxidas stcQ and the reductase stcR might be involved in the biosynthetic step from versicolorin A to demethylsterigmatocystin. The final step in the biosynthesis of sterigmatocystin is the methylation of demethylsterigmatocystin catalyzed by the methyltransferase stcP. The polypeptide is Norsolorinic acid reductase stcV (Emericella nidulans (strain FGSC A4 / ATCC 38163 / CBS 112.46 / NRRL 194 / M139) (Aspergillus nidulans)).